A 306-amino-acid chain; its full sequence is Small ribosomal subunit protein uS2 (306 aa).

The tract at residues 257 to 306 (EGDKKDETAAAAEVQTSAETEKVADAEKPAEAVAEAEAEAPAADADAEQA) is disordered. The segment covering 275–286 (ETEKVADAEKPA) has biased composition (basic and acidic residues). Low complexity predominate over residues 287–300 (EAVAEAEAEAPAAD).

The protein belongs to the universal ribosomal protein uS2 family.

This is Small ribosomal subunit protein uS2 from Streptomyces griseus subsp. griseus (strain JCM 4626 / CBS 651.72 / NBRC 13350 / KCC S-0626 / ISP 5235).